Reading from the N-terminus, the 279-residue chain is Tryptophan synthase alpha chain (279 aa).

Residues E50 and D61 each act as proton acceptor in the active site.

This sequence belongs to the TrpA family. In terms of assembly, tetramer of two alpha and two beta chains.

It catalyses the reaction (1S,2R)-1-C-(indol-3-yl)glycerol 3-phosphate + L-serine = D-glyceraldehyde 3-phosphate + L-tryptophan + H2O. Its pathway is amino-acid biosynthesis; L-tryptophan biosynthesis; L-tryptophan from chorismate: step 5/5. Functionally, the alpha subunit is responsible for the aldol cleavage of indoleglycerol phosphate to indole and glyceraldehyde 3-phosphate. This is Tryptophan synthase alpha chain from Brucella suis biovar 1 (strain 1330).